Consider the following 1024-residue polypeptide: SAC3 family protein 1 (1024 aa).

The disordered stretch occupies residues methionine 1–serine 62. Positions arginine 11–serine 21 are enriched in basic residues. Positions lysine 22–serine 38 are enriched in basic and acidic residues. Residues valine 39 to alanine 52 show a composition bias toward acidic residues. The PCI domain maps to glutamate 243 to lysine 433. Serine 841 is subject to Phosphoserine. Residues alanine 945–threonine 1022 adopt a coiled-coil conformation.

Belongs to the SAC3 family.

It is found in the cytoplasm. The protein resides in the nucleus envelope. The chain is SAC3 family protein 1 from Schizosaccharomyces pombe (strain 972 / ATCC 24843) (Fission yeast).